The chain runs to 207 residues: Holliday junction branch migration complex subunit RuvA (207 aa).

Positions 1 to 65 are domain I; sequence MIGRIRGVIL…EDAQLLYGFN (65 aa). The interval 66 to 143 is domain II; the sequence is QKQERALFRE…KGLNGDLFEQ (78 aa). The flexible linker stretch occupies residues 144–158; it reads NGDIELPASASSKAP. The interval 159–207 is domain III; it reads SAADIEAEASAALIALGYKPQEAAKMISRVATAGADSETLIKEALRAAI.

This sequence belongs to the RuvA family. As to quaternary structure, homotetramer. Forms an RuvA(8)-RuvB(12)-Holliday junction (HJ) complex. HJ DNA is sandwiched between 2 RuvA tetramers; dsDNA enters through RuvA and exits via RuvB. An RuvB hexamer assembles on each DNA strand where it exits the tetramer. Each RuvB hexamer is contacted by two RuvA subunits (via domain III) on 2 adjacent RuvB subunits; this complex drives branch migration. In the full resolvosome a probable DNA-RuvA(4)-RuvB(12)-RuvC(2) complex forms which resolves the HJ.

It is found in the cytoplasm. Its function is as follows. The RuvA-RuvB-RuvC complex processes Holliday junction (HJ) DNA during genetic recombination and DNA repair, while the RuvA-RuvB complex plays an important role in the rescue of blocked DNA replication forks via replication fork reversal (RFR). RuvA specifically binds to HJ cruciform DNA, conferring on it an open structure. The RuvB hexamer acts as an ATP-dependent pump, pulling dsDNA into and through the RuvAB complex. HJ branch migration allows RuvC to scan DNA until it finds its consensus sequence, where it cleaves and resolves the cruciform DNA. The sequence is that of Holliday junction branch migration complex subunit RuvA from Proteus mirabilis (strain HI4320).